A 475-amino-acid polypeptide reads, in one-letter code: Bifunctional protein HldE (475 aa).

Positions 1 to 318 (MMQYSLKFNQ…ENAIHHREET (318 aa)) are ribokinase. Position 195 to 198 (195 to 198 (NMAE)) interacts with ATP. Asp264 is an active-site residue. The segment at 344 to 475 (MTNGCFDILH…DVIKKIQAIR (132 aa)) is cytidylyltransferase.

This sequence in the N-terminal section; belongs to the carbohydrate kinase PfkB family. The protein in the C-terminal section; belongs to the cytidylyltransferase family. Homodimer.

It carries out the reaction D-glycero-beta-D-manno-heptose 7-phosphate + ATP = D-glycero-beta-D-manno-heptose 1,7-bisphosphate + ADP + H(+). It catalyses the reaction D-glycero-beta-D-manno-heptose 1-phosphate + ATP + H(+) = ADP-D-glycero-beta-D-manno-heptose + diphosphate. The protein operates within nucleotide-sugar biosynthesis; ADP-L-glycero-beta-D-manno-heptose biosynthesis; ADP-L-glycero-beta-D-manno-heptose from D-glycero-beta-D-manno-heptose 7-phosphate: step 1/4. Its pathway is nucleotide-sugar biosynthesis; ADP-L-glycero-beta-D-manno-heptose biosynthesis; ADP-L-glycero-beta-D-manno-heptose from D-glycero-beta-D-manno-heptose 7-phosphate: step 3/4. It participates in bacterial outer membrane biogenesis; LOS core biosynthesis. In terms of biological role, catalyzes the phosphorylation of D-glycero-D-manno-heptose 7-phosphate at the C-1 position to selectively form D-glycero-beta-D-manno-heptose-1,7-bisphosphate. Catalyzes the ADP transfer from ATP to D-glycero-beta-D-manno-heptose 1-phosphate, yielding ADP-D-glycero-beta-D-manno-heptose. The sequence is that of Bifunctional protein HldE from Haemophilus ducreyi (strain 35000HP / ATCC 700724).